A 335-amino-acid chain; its full sequence is Beta-ketoacyl-[acyl-carrier-protein] synthase III (335 aa).

Active-site residues include cysteine 119 and histidine 261. The segment at 262-266 (QANQR) is ACP-binding. The active site involves asparagine 291.

It belongs to the thiolase-like superfamily. FabH family. As to quaternary structure, homodimer.

The protein localises to the cytoplasm. The enzyme catalyses malonyl-[ACP] + acetyl-CoA + H(+) = 3-oxobutanoyl-[ACP] + CO2 + CoA. It participates in lipid metabolism; fatty acid biosynthesis. Catalyzes the condensation reaction of fatty acid synthesis by the addition to an acyl acceptor of two carbons from malonyl-ACP. Catalyzes the first condensation reaction which initiates fatty acid synthesis and may therefore play a role in governing the total rate of fatty acid production. Possesses both acetoacetyl-ACP synthase and acetyl transacylase activities. Its substrate specificity determines the biosynthesis of branched-chain and/or straight-chain of fatty acids. The protein is Beta-ketoacyl-[acyl-carrier-protein] synthase III of Prochlorococcus marinus (strain MIT 9301).